A 1305-amino-acid chain; its full sequence is DNA-directed DNA polymerase (1305 aa).

The protein belongs to the DNA polymerase type-C family.

The enzyme catalyses DNA(n) + a 2'-deoxyribonucleoside 5'-triphosphate = DNA(n+1) + diphosphate. In terms of biological role, replicates viral genomic DNA. This is DNA-directed DNA polymerase from Bacillus pumilus (Bacillus mesentericus).